Consider the following 251-residue polypeptide: Carbohydrate deacetylase (251 aa).

2 residues coordinate Mg(2+): H59 and H122.

The protein belongs to the YdjC deacetylase family. As to quaternary structure, homodimer. The cofactor is Mg(2+).

Functionally, probably catalyzes the deacetylation of acetylated carbohydrates an important step in the degradation of oligosaccharides. This chain is Carbohydrate deacetylase, found in Vibrio campbellii (strain ATCC BAA-1116).